A 229-amino-acid polypeptide reads, in one-letter code: Peptidyl-prolyl cis-trans isomerase FKBP17-1, chloroplastic (229 aa).

A chloroplast-targeting transit peptide spans 1–63; the sequence is MIRCFAWTPL…SISLSIIAVT (63 aa). The region spanning 105–225 is the PPIase FKBP-type domain; the sequence is GDQIEIHYYG…VFDIELVSTR (121 aa).

Belongs to the FKBP-type PPIase family.

The protein localises to the plastid. The protein resides in the chloroplast thylakoid lumen. The catalysed reaction is [protein]-peptidylproline (omega=180) = [protein]-peptidylproline (omega=0). Its function is as follows. PPIases accelerate the folding of proteins. It catalyzes the cis-trans isomerization of proline imidic peptide bonds in oligopeptides. This chain is Peptidyl-prolyl cis-trans isomerase FKBP17-1, chloroplastic (FKBP17-1), found in Arabidopsis thaliana (Mouse-ear cress).